Reading from the N-terminus, the 208-residue chain is Protein GrpE (208 aa).

Over residues 1-12 (MTNKDESVEKNT) the composition is skewed to basic and acidic residues. The disordered stretch occupies residues 1-49 (MTNKDESVEKNTESTVEVTNVKQNIDDSVEQTEESKGHLQDEAIEETSD). The span at 13–23 (ESTVEVTNVKQ) shows a compositional bias: polar residues.

The protein belongs to the GrpE family. As to quaternary structure, homodimer.

The protein localises to the cytoplasm. Participates actively in the response to hyperosmotic and heat shock by preventing the aggregation of stress-denatured proteins, in association with DnaK and GrpE. It is the nucleotide exchange factor for DnaK and may function as a thermosensor. Unfolded proteins bind initially to DnaJ; upon interaction with the DnaJ-bound protein, DnaK hydrolyzes its bound ATP, resulting in the formation of a stable complex. GrpE releases ADP from DnaK; ATP binding to DnaK triggers the release of the substrate protein, thus completing the reaction cycle. Several rounds of ATP-dependent interactions between DnaJ, DnaK and GrpE are required for fully efficient folding. The polypeptide is Protein GrpE (Staphylococcus aureus (strain bovine RF122 / ET3-1)).